Reading from the N-terminus, the 601-residue chain is Arginine--tRNA ligase (601 aa).

Positions alanine 135–histidine 145 match the 'HIGH' region motif.

The protein belongs to the class-I aminoacyl-tRNA synthetase family. As to quaternary structure, monomer.

It is found in the cytoplasm. The catalysed reaction is tRNA(Arg) + L-arginine + ATP = L-arginyl-tRNA(Arg) + AMP + diphosphate. In Gloeobacter violaceus (strain ATCC 29082 / PCC 7421), this protein is Arginine--tRNA ligase.